The following is a 283-amino-acid chain: Urease accessory protein UreD 2 (283 aa).

Residues 1–11 show a composition bias toward basic and acidic residues; the sequence is MGRRAPDRLDR. Residues 1–30 are disordered; it reads MGRRAPDRLDRGVTTTSPRTQAPPQAGRGV. The segment covering 13–23 has biased composition (polar residues); sequence VTTTSPRTQAP.

The protein belongs to the UreD family. UreD, UreF and UreG form a complex that acts as a GTP-hydrolysis-dependent molecular chaperone, activating the urease apoprotein by helping to assemble the nickel containing metallocenter of UreC. The UreE protein probably delivers the nickel.

The protein resides in the cytoplasm. Functionally, required for maturation of urease via the functional incorporation of the urease nickel metallocenter. In Saccharopolyspora erythraea (strain ATCC 11635 / DSM 40517 / JCM 4748 / NBRC 13426 / NCIMB 8594 / NRRL 2338), this protein is Urease accessory protein UreD 2.